The chain runs to 61 residues: Large ribosomal subunit protein uL30 (61 aa).

This sequence belongs to the universal ribosomal protein uL30 family. In terms of assembly, part of the 50S ribosomal subunit.

This Jannaschia sp. (strain CCS1) protein is Large ribosomal subunit protein uL30.